A 291-amino-acid chain; its full sequence is Proteasomal ubiquitin receptor ADRM1 homolog rpn1301 (291 aa).

A Pru domain is found at 1–114; it reads MSLITFKAGK…ERINSYIKDQ (114 aa). The interval 135-162 is disordered; it reads TVEQSEPIAQPTESSKESSEIGAPNSDE. Residues 178 to 290 enclose the DEUBAD domain; that stretch reads AQAGFGGSTV…ARFVSRNNGS (113 aa).

The protein belongs to the ADRM1 family. As to quaternary structure, component of the 19S proteasome regulatory particle complex. The 2 S.pombe rpn13 homologs, rpn1301 and rpn1302 are present at a 0.2-1 ratio.

Its subcellular location is the cytoplasm. The protein localises to the nucleus. Component of the 26S proteasome, a multiprotein complex involved in the ATP-dependent degradation of ubiquitinated proteins. This complex plays a key role in the maintenance of protein homeostasis by removing misfolded or damaged proteins, which could impair cellular functions, and by removing proteins whose functions are no longer required. Therefore, the proteasome participates in numerous cellular processes, including cell cycle progression, apoptosis, or DNA damage repair. Within the complex, functions as a proteasomal ubiquitin receptor. This is Proteasomal ubiquitin receptor ADRM1 homolog rpn1301 (rpn1301) from Schizosaccharomyces pombe (strain 972 / ATCC 24843) (Fission yeast).